Here is a 286-residue protein sequence, read N- to C-terminus: Pantothenate synthetase (286 aa).

30-37 (MGNLHAGH) contributes to the ATP binding site. H37 (proton donor) is an active-site residue. Q61 contributes to the (R)-pantoate binding site. Beta-alanine is bound at residue Q61. An ATP-binding site is contributed by 149-152 (GQKD). Q155 is a (R)-pantoate binding site. ATP is bound by residues V178 and 186-189 (LSSR).

It belongs to the pantothenate synthetase family. Homodimer.

The protein localises to the cytoplasm. It carries out the reaction (R)-pantoate + beta-alanine + ATP = (R)-pantothenate + AMP + diphosphate + H(+). The protein operates within cofactor biosynthesis; (R)-pantothenate biosynthesis; (R)-pantothenate from (R)-pantoate and beta-alanine: step 1/1. Catalyzes the condensation of pantoate with beta-alanine in an ATP-dependent reaction via a pantoyl-adenylate intermediate. In Stutzerimonas stutzeri (strain A1501) (Pseudomonas stutzeri), this protein is Pantothenate synthetase.